A 933-amino-acid chain; its full sequence is Protein FAM83G (933 aa).

Disordered stretches follow at residues 339 to 375 (KSAS…QEQK), 450 to 716 (TECQ…SSSV), 870 to 899 (WGPS…FGIP), and 911 to 933 (TKMG…HKDQ). The segment covering 452–466 (CQKGSETSQEQTSSK) has biased composition (polar residues). Composition is skewed to basic and acidic residues over residues 467 to 480 (VETH…EKSG) and 503 to 514 (SKVDQGRMEHSP). Composition is skewed to polar residues over residues 515–531 (SKAT…QSMD) and 538–580 (SPSQ…SSVA). A compositionally biased stretch (basic and acidic residues) spans 590-609 (KEPVKDTVDELEDTSIKDPP). Positions 651 to 660 (KNAQNANIGS) are enriched in polar residues. Positions 702–716 (SSGSGSLPPSSSSSV) are enriched in low complexity. Polar residues predominate over residues 875–886 (AANQPSPLTSNP).

Belongs to the FAM83 family. In terms of assembly, interacts with SMAD1 (via MH2 domain); in a SMAD4-independent manner.

The protein localises to the cytoplasm. It localises to the cytosol. Its subcellular location is the nucleus. Substrate for type I BMP receptor kinase involved in regulation of some target genes of the BMP signaling pathway. May also play a role in other signaling pathways. This Xenopus laevis (African clawed frog) protein is Protein FAM83G (fam83g).